The following is a 477-amino-acid chain: UDP-N-acetylmuramate--L-alanine ligase (477 aa).

115–121 (GTHGKTT) contributes to the ATP binding site.

It belongs to the MurCDEF family.

The protein localises to the cytoplasm. It carries out the reaction UDP-N-acetyl-alpha-D-muramate + L-alanine + ATP = UDP-N-acetyl-alpha-D-muramoyl-L-alanine + ADP + phosphate + H(+). Its pathway is cell wall biogenesis; peptidoglycan biosynthesis. Cell wall formation. In Gluconobacter oxydans (strain 621H) (Gluconobacter suboxydans), this protein is UDP-N-acetylmuramate--L-alanine ligase.